A 254-amino-acid chain; its full sequence is 5'-nucleotidase SurE (254 aa).

Positions 8, 9, 39, and 91 each coordinate a divalent metal cation.

This sequence belongs to the SurE nucleotidase family. A divalent metal cation serves as cofactor.

It is found in the cytoplasm. It carries out the reaction a ribonucleoside 5'-phosphate + H2O = a ribonucleoside + phosphate. In terms of biological role, nucleotidase that shows phosphatase activity on nucleoside 5'-monophosphates. The polypeptide is 5'-nucleotidase SurE (Pseudoalteromonas translucida (strain TAC 125)).